Consider the following 430-residue polypeptide: Enolase (430 aa).

(2R)-2-phosphoglycerate is bound at residue glutamine 165. Residue glutamate 207 is the Proton donor of the active site. 3 residues coordinate Mg(2+): aspartate 244, glutamate 287, and aspartate 314. Residues lysine 339, arginine 368, serine 369, and lysine 390 each coordinate (2R)-2-phosphoglycerate. Lysine 339 (proton acceptor) is an active-site residue.

This sequence belongs to the enolase family. In terms of assembly, component of the RNA degradosome, a multiprotein complex involved in RNA processing and mRNA degradation. It depends on Mg(2+) as a cofactor.

It localises to the cytoplasm. The protein resides in the secreted. It is found in the cell surface. The enzyme catalyses (2R)-2-phosphoglycerate = phosphoenolpyruvate + H2O. It participates in carbohydrate degradation; glycolysis; pyruvate from D-glyceraldehyde 3-phosphate: step 4/5. In terms of biological role, catalyzes the reversible conversion of 2-phosphoglycerate (2-PG) into phosphoenolpyruvate (PEP). It is essential for the degradation of carbohydrates via glycolysis. The protein is Enolase of Xylella fastidiosa (strain M23).